The following is a 154-amino-acid chain: 6,7-dimethyl-8-ribityllumazine synthase (154 aa).

Residues Phe-21, 55-57 (AFE), and 79-81 (CVI) contribute to the 5-amino-6-(D-ribitylamino)uracil site. 84-85 (AT) is a binding site for (2S)-2-hydroxy-3-oxobutyl phosphate. The active-site Proton donor is the His-87. A 5-amino-6-(D-ribitylamino)uracil-binding site is contributed by Phe-112. Arg-126 contacts (2S)-2-hydroxy-3-oxobutyl phosphate.

The protein belongs to the DMRL synthase family. As to quaternary structure, forms an icosahedral capsid composed of 60 subunits, arranged as a dodecamer of pentamers.

The enzyme catalyses (2S)-2-hydroxy-3-oxobutyl phosphate + 5-amino-6-(D-ribitylamino)uracil = 6,7-dimethyl-8-(1-D-ribityl)lumazine + phosphate + 2 H2O + H(+). It functions in the pathway cofactor biosynthesis; riboflavin biosynthesis; riboflavin from 2-hydroxy-3-oxobutyl phosphate and 5-amino-6-(D-ribitylamino)uracil: step 1/2. Functionally, catalyzes the formation of 6,7-dimethyl-8-ribityllumazine by condensation of 5-amino-6-(D-ribitylamino)uracil with 3,4-dihydroxy-2-butanone 4-phosphate. This is the penultimate step in the biosynthesis of riboflavin. The protein is 6,7-dimethyl-8-ribityllumazine synthase of Staphylococcus aureus (strain Mu50 / ATCC 700699).